Here is an 840-residue protein sequence, read N- to C-terminus: DNA helicase MCM8 (840 aa).

Residues 16 to 54 (QSWKRGRGGGNFSGKWREREHRPDLSKTTGKRTSEQTPQ) form a disordered region. Over residues 30–40 (KWREREHRPDL) the composition is skewed to basic and acidic residues. Residues 402–609 (LFKLIVNSLC…HHDHLLSEHV (208 aa)) enclose the MCM domain. Residue 454–461 (GDPGLGKS) participates in ATP binding. The residue at position 630 (Ser-630) is a Phosphoserine.

This sequence belongs to the MCM family. In terms of assembly, component of the MCM8-MCM9 complex, which forms a hexamer composed of MCM8 and MCM9. Interacts with the DNA mismatch repair (MMR) complex composed at least of MSH2, MSH3, MSH6, PMS1 and MLH1. Interacts with RAD51; the interaction recruits RAD51 to DNA damage sites. Interacts with the MRN complex composed of MRE11, RAD50 and NBN/NBS1. Interacts with CDC6 and ORC2. Interacts with HROB; the interaction recruits the MCM8-MCM9 complex to DNA damage sites. In terms of tissue distribution, highest levels in placenta, lung and pancreas. Low levels in skeletal muscle and kidney. Expressed in various tumors with highest levels in colon and lung cancers.

Its subcellular location is the nucleus. The protein resides in the chromosome. It carries out the reaction ATP + H2O = ADP + phosphate + H(+). Component of the MCM8-MCM9 complex, a complex involved in the repair of double-stranded DNA breaks (DBSs) and DNA interstrand cross-links (ICLs) by homologous recombination (HR). Required for DNA resection by the MRE11-RAD50-NBN/NBS1 (MRN) complex by recruiting the MRN complex to the repair site and by promoting the complex nuclease activity. Probably by regulating the localization of the MNR complex, indirectly regulates the recruitment of downstream effector RAD51 to DNA damage sites including DBSs and ICLs. The MCM8-MCM9 complex is dispensable for DNA replication and S phase progression. However, may play a non-essential for DNA replication: may be involved in the activation of the prereplicative complex (pre-RC) during G(1) phase by recruiting CDC6 to the origin recognition complex (ORC). Probably by regulating HR, plays a key role during gametogenesis. Stabilizes MCM9 protein. The polypeptide is DNA helicase MCM8 (MCM8) (Homo sapiens (Human)).